The sequence spans 265 residues: 5'-nucleotidase SurE (265 aa).

A divalent metal cation contacts are provided by Asp8, Asp9, Ser40, and Asn98.

This sequence belongs to the SurE nucleotidase family. A divalent metal cation serves as cofactor.

The protein resides in the cytoplasm. It carries out the reaction a ribonucleoside 5'-phosphate + H2O = a ribonucleoside + phosphate. In terms of biological role, nucleotidase that shows phosphatase activity on nucleoside 5'-monophosphates. The protein is 5'-nucleotidase SurE of Trichormus variabilis (strain ATCC 29413 / PCC 7937) (Anabaena variabilis).